A 205-amino-acid chain; its full sequence is Imidazole glycerol phosphate synthase subunit HisH (205 aa).

Positions 1-205 (MITIVDYQMG…RFATAPVEVA (205 aa)) constitute a Glutamine amidotransferase type-1 domain. Catalysis depends on C79, which acts as the Nucleophile. Catalysis depends on residues H182 and E184.

Heterodimer of HisH and HisF.

Its subcellular location is the cytoplasm. The enzyme catalyses 5-[(5-phospho-1-deoxy-D-ribulos-1-ylimino)methylamino]-1-(5-phospho-beta-D-ribosyl)imidazole-4-carboxamide + L-glutamine = D-erythro-1-(imidazol-4-yl)glycerol 3-phosphate + 5-amino-1-(5-phospho-beta-D-ribosyl)imidazole-4-carboxamide + L-glutamate + H(+). The catalysed reaction is L-glutamine + H2O = L-glutamate + NH4(+). It participates in amino-acid biosynthesis; L-histidine biosynthesis; L-histidine from 5-phospho-alpha-D-ribose 1-diphosphate: step 5/9. Functionally, IGPS catalyzes the conversion of PRFAR and glutamine to IGP, AICAR and glutamate. The HisH subunit catalyzes the hydrolysis of glutamine to glutamate and ammonia as part of the synthesis of IGP and AICAR. The resulting ammonia molecule is channeled to the active site of HisF. This is Imidazole glycerol phosphate synthase subunit HisH from Rhodopirellula baltica (strain DSM 10527 / NCIMB 13988 / SH1).